The primary structure comprises 507 residues: Probable lipid II flippase MurJ (507 aa).

13 consecutive transmembrane segments (helical) span residues Leu3–Val23, Ile54–Ile74, Leu92–Ile112, Ile132–Ser152, Phe156–Ile176, Ile185–Cys205, Ile268–Met288, Ile310–Thr330, Ile351–Phe371, Thr379–Met399, Ile405–Tyr425, Ile438–Leu458, and Leu472–Gly492.

This sequence belongs to the MurJ/MviN family.

Its subcellular location is the cell inner membrane. Its pathway is cell wall biogenesis; peptidoglycan biosynthesis. Its function is as follows. Involved in peptidoglycan biosynthesis. Transports lipid-linked peptidoglycan precursors from the inner to the outer leaflet of the cytoplasmic membrane. This Rickettsia prowazekii (strain Madrid E) protein is Probable lipid II flippase MurJ.